The sequence spans 1099 residues: Protein transport protein Sec24A (1099 aa).

3 disordered regions span residues 1-36, 65-139, and 279-317; these read MSQPGIPASGGSSTGLQAQNGAASASGSPYTNGPVQ, KTLN…LPGA, and SQPTTKNPTMSRSVGYSYPSLPPGYQNTAPPSTTGAGLP. Polar residues-rich tracts occupy residues 10–20, 68–90, 108–126, 279–292, and 303–317; these read GGSSTGLQAQN, NPVSGQSNSGGSQTVSPLSNYQG, SLHSGPSPQMPLPTSQNPA, SQPTTKNPTMSRSV, and YQNTAPPSTTGAGLP. Cysteine 437, cysteine 440, cysteine 458, and cysteine 461 together coordinate Zn(2+). A zinc finger-like region spans residues 437–461; it reads CRSCRTYINPFVSFLDQRRWKCNLC. One copy of the Gelsolin-like repeat lies at 972–1044; it reads PQPPILQLSV…TPESARTIAF (73 aa).

It belongs to the SEC23/SEC24 family. SEC24 subfamily. In terms of assembly, COPII is composed of at least five proteins: the Sec23/24 complex, the Sec13/31 complex and Sar1. Interacts with TMED2. Interacts (as part of the Sec23/24 complex) with SEC22B; recruits SEC22B into COPII-coated vesicles for its transport from the endoplasmic reticulum to the Golgi. Interacts with STING1; promoting STING1 translocation to COPII vesicles in a STEEP1-dependent manner. Interacts with TMEM39A. Interacts with SACM1L; this interaction is reduced in the absence of TMEM39A. Interacts with kinase FAM20C; transport of FAM20C from the endoplasmic reticulum to the Golgi is likely to be mediated by COPII vesicles.

It localises to the cytoplasmic vesicle. It is found in the COPII-coated vesicle membrane. The protein localises to the endoplasmic reticulum membrane. Its subcellular location is the cytoplasm. The protein resides in the cytosol. Functionally, component of the coat protein complex II (COPII) which promotes the formation of transport vesicles from the endoplasmic reticulum (ER). The coat has two main functions, the physical deformation of the endoplasmic reticulum membrane into vesicles and the selection of cargo molecules for their transport to the Golgi complex. Plays a central role in cargo selection within the COPII complex and together with SEC24B may have a different specificity compared to SEC24C and SEC24D. May package preferentially cargos with cytoplasmic DxE or LxxLE motifs and may also recognize conformational epitopes. The chain is Protein transport protein Sec24A from Bos taurus (Bovine).